Consider the following 211-residue polypeptide: Adenylate kinase (211 aa).

13–18 (GAGKGT) serves as a coordination point for ATP. The tract at residues 33–62 (STGDILRVAVANKTKLGLEAKKFMDAGQLV) is NMP. AMP contacts are provided by residues Thr-34, Arg-39, 60-62 (QLV), 88-91 (GFPR), and Gln-95. Residues 129-161 (GRRTSKVTGKIYHIKFNPPVDEKPEDLVQRADD) are LID. ATP is bound by residues Arg-130 and 139 to 140 (IY). AMP-binding residues include Arg-158 and Arg-169. Lys-197 contributes to the ATP binding site.

The protein belongs to the adenylate kinase family. In terms of assembly, monomer.

It localises to the cytoplasm. The catalysed reaction is AMP + ATP = 2 ADP. It participates in purine metabolism; AMP biosynthesis via salvage pathway; AMP from ADP: step 1/1. In terms of biological role, catalyzes the reversible transfer of the terminal phosphate group between ATP and AMP. Plays an important role in cellular energy homeostasis and in adenine nucleotide metabolism. This is Adenylate kinase from Fusobacterium nucleatum subsp. nucleatum (strain ATCC 25586 / DSM 15643 / BCRC 10681 / CIP 101130 / JCM 8532 / KCTC 2640 / LMG 13131 / VPI 4355).